The chain runs to 175 residues: Large ribosomal subunit protein uL10 (175 aa).

The protein belongs to the universal ribosomal protein uL10 family. In terms of assembly, part of the ribosomal stalk of the 50S ribosomal subunit. The N-terminus interacts with L11 and the large rRNA to form the base of the stalk. The C-terminus forms an elongated spine to which L12 dimers bind in a sequential fashion forming a multimeric L10(L12)X complex.

In terms of biological role, forms part of the ribosomal stalk, playing a central role in the interaction of the ribosome with GTP-bound translation factors. The polypeptide is Large ribosomal subunit protein uL10 (rplJ) (Xylella fastidiosa (strain 9a5c)).